Consider the following 347-residue polypeptide: Phosphate acyltransferase (347 aa).

The protein belongs to the PlsX family. Homodimer. Probably interacts with PlsY.

Its subcellular location is the cytoplasm. The enzyme catalyses a fatty acyl-[ACP] + phosphate = an acyl phosphate + holo-[ACP]. It participates in lipid metabolism; phospholipid metabolism. Catalyzes the reversible formation of acyl-phosphate (acyl-PO(4)) from acyl-[acyl-carrier-protein] (acyl-ACP). This enzyme utilizes acyl-ACP as fatty acyl donor, but not acyl-CoA. The polypeptide is Phosphate acyltransferase (Oleidesulfovibrio alaskensis (strain ATCC BAA-1058 / DSM 17464 / G20) (Desulfovibrio alaskensis)).